The primary structure comprises 680 residues: Tumor protein 63 (680 aa).

Positions 1 to 107 (MNFETSRCAT…MQDSDLSDPM (107 aa)) are transcription activation. Polar residues predominate over residues 122 to 157 (QQIQNGSSSTSPYNTDHAQNSVTAPSPYAQPSSTFD). The segment at 122 to 171 (QQIQNGSSSTSPYNTDHAQNSVTAPSPYAQPSSTFDALSPSPAIPSNTDY) is disordered. The DNA-binding element occupies 170–362 (DYPGPHSFDV…KADEDSIRKQ (193 aa)). Positions 244, 247, 308, and 312 each coordinate Zn(2+). Residues 351 to 360 (DRKADEDSIR) show a composition bias toward basic and acidic residues. Disordered regions lie at residues 351–393 (DRKA…IKKR) and 436–472 (RQQQQQQHQHLLQKQTSMQSQSSYGNSSPPLNKMNSM). The interaction with HIPK2 stretch occupies residues 352–388 (RKADEDSIRKQQVSDSAKNGDGTKRPFRQNTHGIQMT). The segment covering 379–389 (RQNTHGIQMTS) has biased composition (polar residues). Positions 394–443 (RSPDDELLYLPVRGRETYEMLLKIKESLELMQYLPQHTIETYRQQQQQQH) are oligomerization. Low complexity predominate over residues 437–463 (QQQQQQHQHLLQKQTSMQSQSSYGNSS). Residues 541–607 (PPYPTDCSIV…WKGILDHRQL (67 aa)) enclose the SAM domain. Residues 610 to 680 (FSSPPHLLRT…KQQRIKEEGE (71 aa)) are transactivation inhibition. A Glycyl lysine isopeptide (Lys-Gly) (interchain with G-Cter in SUMO) cross-link involves residue Lys676.

It belongs to the p53 family. As to quaternary structure, binds DNA as a homotetramer. Isoform composition of the tetramer may determine transactivation activity. Interacts with HIPK2. Interacts with SSRP1, leading to stimulate coactivator activity. Interacts with WWP1. Interacts with PDS5A. Interacts (via activation domain) with NOC2L. The cofactor is Zn(2+). In terms of processing, may be sumoylated. Ubiquitinated. Polyubiquitination involves WWP1 and leads to proteasomal degradation of this protein. As to expression, widely expressed, notably in thymus, prostate, placenta, and skeletal muscle, although the precise isoform varies according to tissue type. Progenitor cell layers of skin, breast and prostate express high levels of DeltaN-type isoforms.

Its subcellular location is the nucleus. Its function is as follows. Acts as a sequence specific DNA binding transcriptional activator or repressor. The isoforms contain a varying set of transactivation and auto-regulating transactivation inhibiting domains thus showing an isoform specific activity. May be required in conjunction with TP73/p73 for initiation of p53/TP53 dependent apoptosis in response to genotoxic insults and the presence of activated oncogenes. Involved in Notch signaling by probably inducing JAG1 and JAG2. Activates RIPK4 transcription. Plays a role in the regulation of epithelial morphogenesis. The ratio of DeltaN-type and TA*-type isoforms may govern the maintenance of epithelial stem cell compartments and regulate the initiation of epithelial stratification from the undifferentiated embryonal ectoderm. Required for limb formation from the apical ectodermal ridge. Activates transcription of the p21 promoter. This is Tumor protein 63 (Tp63) from Rattus norvegicus (Rat).